The chain runs to 49 residues: IgW transmembrane form Tm2T7/Tm7T7/Tm3T3 (49 aa).

N-linked (GlcNAc...) asparagine glycosylation occurs at asparagine 3. The helical transmembrane segment at 25-45 (VAAFAILFILSFLYSTFVTVV) threads the bilayer.

Expressed in the spleen. May also be expressed in other lymphoid tissues.

It localises to the membrane. This is IgW transmembrane form Tm2T7/Tm7T7/Tm3T3 from Heterodontus francisci (Horn shark).